Here is a 227-residue protein sequence, read N- to C-terminus: 7-cyano-7-deazaguanine synthase (227 aa).

7–17 (LSGGMDSLVTT) serves as a coordination point for ATP. Zn(2+)-binding residues include C187, C195, C198, and C201.

The protein belongs to the QueC family. The cofactor is Zn(2+).

The enzyme catalyses 7-carboxy-7-deazaguanine + NH4(+) + ATP = 7-cyano-7-deazaguanine + ADP + phosphate + H2O + H(+). The protein operates within purine metabolism; 7-cyano-7-deazaguanine biosynthesis. Functionally, catalyzes the ATP-dependent conversion of 7-carboxy-7-deazaguanine (CDG) to 7-cyano-7-deazaguanine (preQ(0)). The sequence is that of 7-cyano-7-deazaguanine synthase from Chlorobium phaeovibrioides (strain DSM 265 / 1930) (Prosthecochloris vibrioformis (strain DSM 265)).